Consider the following 613-residue polypeptide: Dihydroxy-acid dehydratase (613 aa).

Mg(2+) is bound at residue aspartate 81. Residue cysteine 122 participates in [2Fe-2S] cluster binding. Aspartate 123 and lysine 124 together coordinate Mg(2+). Lysine 124 is modified (N6-carboxylysine). A [2Fe-2S] cluster-binding site is contributed by cysteine 195. A Mg(2+)-binding site is contributed by glutamate 491. Serine 517 serves as the catalytic Proton acceptor.

The protein belongs to the IlvD/Edd family. In terms of assembly, homodimer. [2Fe-2S] cluster is required as a cofactor. Requires Mg(2+) as cofactor.

The catalysed reaction is (2R)-2,3-dihydroxy-3-methylbutanoate = 3-methyl-2-oxobutanoate + H2O. The enzyme catalyses (2R,3R)-2,3-dihydroxy-3-methylpentanoate = (S)-3-methyl-2-oxopentanoate + H2O. The protein operates within amino-acid biosynthesis; L-isoleucine biosynthesis; L-isoleucine from 2-oxobutanoate: step 3/4. It functions in the pathway amino-acid biosynthesis; L-valine biosynthesis; L-valine from pyruvate: step 3/4. In terms of biological role, functions in the biosynthesis of branched-chain amino acids. Catalyzes the dehydration of (2R,3R)-2,3-dihydroxy-3-methylpentanoate (2,3-dihydroxy-3-methylvalerate) into 2-oxo-3-methylpentanoate (2-oxo-3-methylvalerate) and of (2R)-2,3-dihydroxy-3-methylbutanoate (2,3-dihydroxyisovalerate) into 2-oxo-3-methylbutanoate (2-oxoisovalerate), the penultimate precursor to L-isoleucine and L-valine, respectively. The sequence is that of Dihydroxy-acid dehydratase from Nitrobacter hamburgensis (strain DSM 10229 / NCIMB 13809 / X14).